Consider the following 138-residue polypeptide: Large ribosomal subunit protein bL17 (138 aa).

This sequence belongs to the bacterial ribosomal protein bL17 family. In terms of assembly, part of the 50S ribosomal subunit. Contacts protein L32.

This Phenylobacterium zucineum (strain HLK1) protein is Large ribosomal subunit protein bL17.